Here is a 181-residue protein sequence, read N- to C-terminus: ATP synthase subunit delta (181 aa).

The protein belongs to the ATPase delta chain family. As to quaternary structure, F-type ATPases have 2 components, F(1) - the catalytic core - and F(0) - the membrane proton channel. F(1) has five subunits: alpha(3), beta(3), gamma(1), delta(1), epsilon(1). F(0) has three main subunits: a(1), b(2) and c(10-14). The alpha and beta chains form an alternating ring which encloses part of the gamma chain. F(1) is attached to F(0) by a central stalk formed by the gamma and epsilon chains, while a peripheral stalk is formed by the delta and b chains.

It is found in the cell inner membrane. F(1)F(0) ATP synthase produces ATP from ADP in the presence of a proton or sodium gradient. F-type ATPases consist of two structural domains, F(1) containing the extramembraneous catalytic core and F(0) containing the membrane proton channel, linked together by a central stalk and a peripheral stalk. During catalysis, ATP synthesis in the catalytic domain of F(1) is coupled via a rotary mechanism of the central stalk subunits to proton translocation. Functionally, this protein is part of the stalk that links CF(0) to CF(1). It either transmits conformational changes from CF(0) to CF(1) or is implicated in proton conduction. This chain is ATP synthase subunit delta, found in Protochlamydia amoebophila (strain UWE25).